A 440-amino-acid chain; its full sequence is C4-dicarboxylate transport protein (440 aa).

9 consecutive transmembrane segments (helical) span residues L7–Y29, M49–M66, A79–V101, V143–A165, V186–F208, L221–I243, V291–M313, I328–G350, and V355–I377. The segment at G419–R440 is disordered.

The protein belongs to the dicarboxylate/amino acid:cation symporter (DAACS) (TC 2.A.23) family.

The protein resides in the cell inner membrane. Its function is as follows. Responsible for the transport of dicarboxylates such as succinate, fumarate, and malate from the periplasm across the membrane. This is C4-dicarboxylate transport protein from Pseudomonas putida (strain ATCC 47054 / DSM 6125 / CFBP 8728 / NCIMB 11950 / KT2440).